A 340-amino-acid chain; its full sequence is Guanine nucleotide-binding protein G(I)/G(S)/G(T) subunit beta-1 (340 aa).

S2 is modified (N-acetylserine). S2 is subject to Phosphoserine. 7 WD repeats span residues 46 to 94 (RTRR…HAIP), 95 to 140 (LRSS…RELA), 141 to 181 (GHTG…TTFT), 182 to 223 (GHTG…QTFT), 224 to 267 (GHES…YSHD), 268 to 309 (NIIC…GVLA), and 310 to 340 (GHDNRVSCLGVTDDGMAVATGSWDSFLKIWN). H266 is subject to Phosphohistidine.

Belongs to the WD repeat G protein beta family. In terms of assembly, g proteins are composed of 3 units, alpha, beta and gamma. The heterodimer formed by GNB1 and GNG2 interacts with ARHGEF5. The heterodimer formed by GNB1 and GNG2 interacts with GRK2. Forms a complex with GNAO1 and GNG3. Interacts with ARHGEF18 and RASD2. Forms complexes with TAS2R14 and G-proteins; these complexes play a role in the perception of bitterness. Component of the TAS2R14-GNAI1 complex, consisting of TAS2R14, GNAI1, GNB1 and GNG2. Component of the TAS2R14-GNAT3 complex, consisting of TAS2R14, GNAT3, GNB1 and GNG2. Component of the TAS2R14-GNAS2 complex, consisting of TAS2R14, GNAS2, GNB1 and GNG2. Phosphorylation at His-266 by NDKB contributes to G protein activation by increasing the high energetic phosphate transfer onto GDP.

Its function is as follows. Guanine nucleotide-binding proteins (G proteins) are involved as a modulator or transducer in various transmembrane signaling systems. The beta and gamma chains are required for the GTPase activity, for replacement of GDP by GTP, and for G protein-effector interaction. The chain is Guanine nucleotide-binding protein G(I)/G(S)/G(T) subunit beta-1 (GNB1) from Bos taurus (Bovine).